A 208-amino-acid polypeptide reads, in one-letter code: Riboflavin synthase (208 aa).

Lumazine-binding repeat units lie at residues 1 to 97 (MFTG…MGGH) and 98 to 195 (FVQG…EKLV). Residues 4 to 6 (GLV), 48 to 50 (CLT), 62 to 67 (GIAPES), 101 to 103 (GHV), Lys137, 146 to 148 (SLT), and 160 to 165 (MMISYT) contribute to the 2,4-dihydroxypteridine site.

Homotrimer.

The catalysed reaction is 2 6,7-dimethyl-8-(1-D-ribityl)lumazine + H(+) = 5-amino-6-(D-ribitylamino)uracil + riboflavin. It participates in cofactor biosynthesis; riboflavin biosynthesis; riboflavin from 2-hydroxy-3-oxobutyl phosphate and 5-amino-6-(D-ribitylamino)uracil: step 2/2. Its function is as follows. Catalyzes the dismutation of two molecules of 6,7-dimethyl-8-ribityllumazine, resulting in the formation of riboflavin and 5-amino-6-(D-ribitylamino)uracil. In Schizosaccharomyces pombe (strain 972 / ATCC 24843) (Fission yeast), this protein is Riboflavin synthase (rib5).